A 458-amino-acid chain; its full sequence is Argininosuccinate lyase (458 aa).

The protein belongs to the lyase 1 family. Argininosuccinate lyase subfamily.

It localises to the cytoplasm. The enzyme catalyses 2-(N(omega)-L-arginino)succinate = fumarate + L-arginine. It participates in amino-acid biosynthesis; L-arginine biosynthesis; L-arginine from L-ornithine and carbamoyl phosphate: step 3/3. The chain is Argininosuccinate lyase from Buchnera aphidicola subsp. Baizongia pistaciae (strain Bp).